A 304-amino-acid polypeptide reads, in one-letter code: UDP-N-acetylenolpyruvoylglucosamine reductase (304 aa).

One can recognise an FAD-binding PCMH-type domain in the interval 33–198; sequence IGGPADLLVM…LEVVLALQEG (166 aa). Arginine 177 is a catalytic residue. Serine 227 serves as the catalytic Proton donor. Glutamate 297 is a catalytic residue.

The protein belongs to the MurB family. The cofactor is FAD.

It is found in the cytoplasm. It carries out the reaction UDP-N-acetyl-alpha-D-muramate + NADP(+) = UDP-N-acetyl-3-O-(1-carboxyvinyl)-alpha-D-glucosamine + NADPH + H(+). The protein operates within cell wall biogenesis; peptidoglycan biosynthesis. Cell wall formation. The chain is UDP-N-acetylenolpyruvoylglucosamine reductase from Alkaliphilus metalliredigens (strain QYMF).